We begin with the raw amino-acid sequence, 195 residues long: Imidazoleglycerol-phosphate dehydratase (195 aa).

Belongs to the imidazoleglycerol-phosphate dehydratase family.

It localises to the cytoplasm. It carries out the reaction D-erythro-1-(imidazol-4-yl)glycerol 3-phosphate = 3-(imidazol-4-yl)-2-oxopropyl phosphate + H2O. The protein operates within amino-acid biosynthesis; L-histidine biosynthesis; L-histidine from 5-phospho-alpha-D-ribose 1-diphosphate: step 6/9. This chain is Imidazoleglycerol-phosphate dehydratase, found in Nitrosomonas eutropha (strain DSM 101675 / C91 / Nm57).